Here is a 551-residue protein sequence, read N- to C-terminus: Cytochrome bc1 complex cytochrome b subunit (551 aa).

Residues 44–64 (FLLGEIALYSFIVLLLTGVYL) traverse the membrane as a helical segment. The heme site is built by His113 and His127. Transmembrane regions (helical) follow at residues 117-137 (ALMF…TGAF), 145-165 (WVIG…GYSM), and 188-208 (VIGT…TILI). The heme site is built by His215 and His230. The next 5 membrane-spanning stretches (helical) occupy residues 216 to 236 (ILLI…LVWF), 265 to 285 (SGAF…FLQI), 334 to 354 (PVWV…YPFL), 380 to 400 (IGAM…NDII), and 417 to 437 (IGMV…CIGL). The interval 532–551 (ALREHQDSIASSPNGERGKH) is disordered.

This sequence belongs to the cytochrome b family. As to quaternary structure, the cytochrome bc1 complex is composed of a cytochrome b (QcrB), the Rieske iron-sulfur protein (QcrA) and a diheme cytochrome c (QcrC) subunit. The cofactor is heme.

It is found in the cell membrane. The enzyme catalyses a quinol + 2 Fe(III)-[cytochrome c](out) = a quinone + 2 Fe(II)-[cytochrome c](out) + 2 H(+)(out). Cytochrome b subunit of the cytochrome bc1 complex, an essential component of the respiratory electron transport chain required for ATP synthesis. The bc1 complex catalyzes the oxidation of ubiquinol and the reduction of cytochrome c in the respiratory chain. The bc1 complex operates through a Q-cycle mechanism that couples electron transfer to generation of the proton gradient that drives ATP synthesis. The cytochrome b subunit contains two ubiquinol reactive sites: the oxidation (QP) site and the reduction (QN) site. This Mycobacterium leprae (strain TN) protein is Cytochrome bc1 complex cytochrome b subunit (qcrB).